Consider the following 810-residue polypeptide: Cation/H(+) antiporter 18 (810 aa).

12 consecutive transmembrane segments (helical) span residues Phe-29–Ala-49, Arg-59–Gly-76, Leu-91–Leu-111, Leu-126–Val-146, Ser-157–Ala-177, Leu-193–Ile-213, Leu-223–Ile-243, Phe-277–Ile-297, Leu-314–Ala-334, Gly-343–Val-363, Ala-374–Ile-394, and Phe-406–Ala-426. Position 804 is a phosphoserine (Ser-804).

The protein belongs to the monovalent cation:proton antiporter 2 (CPA2) transporter (TC 2.A.37) family. CHX (TC 2.A.37.4) subfamily. As to expression, expressed in roots.

Its subcellular location is the membrane. May operate as a cation/H(+) antiporter. The chain is Cation/H(+) antiporter 18 (CHX18) from Arabidopsis thaliana (Mouse-ear cress).